Here is a 495-residue protein sequence, read N- to C-terminus: ATP synthase subunit beta, chloroplastic (495 aa).

An ATP-binding site is contributed by 172-179; the sequence is GGAGVGKT.

This sequence belongs to the ATPase alpha/beta chains family. In terms of assembly, F-type ATPases have 2 components, CF(1) - the catalytic core - and CF(0) - the membrane proton channel. CF(1) has five subunits: alpha(3), beta(3), gamma(1), delta(1), epsilon(1). CF(0) has four main subunits: a(1), b(1), b'(1) and c(9-12).

The protein resides in the plastid. The protein localises to the chloroplast thylakoid membrane. It catalyses the reaction ATP + H2O + 4 H(+)(in) = ADP + phosphate + 5 H(+)(out). Functionally, produces ATP from ADP in the presence of a proton gradient across the membrane. The catalytic sites are hosted primarily by the beta subunits. The polypeptide is ATP synthase subunit beta, chloroplastic (Barnardia japonica (Chinese squill)).